The chain runs to 242 residues: Probable 2-phosphosulfolactate phosphatase (242 aa).

The protein belongs to the ComB family. The cofactor is Mg(2+).

The catalysed reaction is (2R)-O-phospho-3-sulfolactate + H2O = (2R)-3-sulfolactate + phosphate. The polypeptide is Probable 2-phosphosulfolactate phosphatase (Prochlorococcus marinus (strain NATL1A)).